A 438-amino-acid polypeptide reads, in one-letter code: Innexin inx7 (438 aa).

Residues 1–23 (MLNTFSSVRQYLKFDLTRVVIDN) lie on the Cytoplasmic side of the membrane. A helical membrane pass occupies residues 24–44 (IVFKLHYRWTFVILLVATLLI). The Extracellular segment spans residues 45–58 (TSRQYIGEHIQCLS). A helical transmembrane segment spans residues 59-79 (DGVVSPVINTFCFFTPTFTVV). At 80–112 (RDQNQTAYRPGSEPPGIGAFDPEKDTIKRHAYY) the chain is on the cytoplasmic side. A helical membrane pass occupies residues 113–133 (QWVPFVLFFQALCFYIPHALW). At 134–283 (KSWEGGRIKA…VMALNIMNEK (150 aa)) the chain is on the extracellular side. The helical transmembrane segment at 284–304 (IYIILWFWYAFLLIVTVLGLL) threads the bilayer. Residues 305 to 438 (WRILTLCFYR…STSDMAKLPV (134 aa)) lie on the Cytoplasmic side of the membrane. 2 disordered regions span residues 381 to 402 (NDVN…PELS) and 415 to 438 (RRNG…KLPV). Positions 418–431 (GSPSAGGAQGPSTS) are enriched in low complexity.

The protein belongs to the pannexin family. As to expression, expressed around gut lobes in embryonic stages 15-17.

Its subcellular location is the cell membrane. The protein localises to the cell junction. It localises to the gap junction. In terms of biological role, structural components of the gap junctions. This chain is Innexin inx7 (Inx7), found in Drosophila melanogaster (Fruit fly).